A 61-amino-acid polypeptide reads, in one-letter code: MFSMKKSLLLLFFLGTISLSLCEQERDAEEEEGSENGAEDIKINRVVKCSYRPGSPDSRCK.

The first 22 residues, 1-22, serve as a signal peptide directing secretion; it reads MFSMKKSLLLLFFLGTISLSLC. Positions 23–45 are excised as a propeptide; that stretch reads EQERDAEEEEGSENGAEDIKINR.

This sequence belongs to the frog skin active peptide (FSAP) family. Brevinin subfamily. Expressed by the skin glands.

It is found in the secreted. The chain is Odorranain-A6 from Odorrana hainanensis (Odor frog).